The chain runs to 375 residues: Growth/differentiation factor 8 (375 aa).

Residues 1–23 form the signal peptide; sequence MQKLAVYVYIYLFVQISVDPVAL. The propeptide occupies 24–266; sequence DGSSQPTENT…VTDTPKRSRR (243 aa). Asn-71 carries N-linked (GlcNAc...) asparagine glycosylation. Cystine bridges form between Cys-272/Cys-282, Cys-281/Cys-340, Cys-309/Cys-372, and Cys-313/Cys-374.

It belongs to the TGF-beta family. In terms of assembly, homodimer; disulfide-linked.

The protein resides in the secreted. Acts specifically as a negative regulator of skeletal muscle growth. The sequence is that of Growth/differentiation factor 8 (MSTN) from Excalfactoria chinensis (Blue-breasted quail).